The sequence spans 235 residues: Lipoprotein-releasing system ATP-binding protein LolD (235 aa).

Positions 5–235 constitute an ABC transporter domain; that stretch reads LECRDIRKVY…LMTESASVEG (231 aa). 41 to 48 serves as a coordination point for ATP; sequence GSSGSGKS.

The protein belongs to the ABC transporter superfamily. Lipoprotein translocase (TC 3.A.1.125) family. In terms of assembly, the complex is composed of two ATP-binding proteins (LolD) and two transmembrane proteins (LolC and LolE).

The protein localises to the cell inner membrane. Its function is as follows. Part of the ABC transporter complex LolCDE involved in the translocation of mature outer membrane-directed lipoproteins, from the inner membrane to the periplasmic chaperone, LolA. Responsible for the formation of the LolA-lipoprotein complex in an ATP-dependent manner. This is Lipoprotein-releasing system ATP-binding protein LolD from Vibrio parahaemolyticus serotype O3:K6 (strain RIMD 2210633).